A 457-amino-acid chain; its full sequence is MTKKVYVKTFGCQMNEYDSDKMVDVLNAAEGLEKTDTPEDADIILFNTCSVREKAQEKVFSDLGRVRELKEAKPGLLIGVGGCVASQEGASIVSRAPYVDLVFGPQTLHRLPQMIDARRASGRAQVDITFPEIEKFDHLPPARVEGPSAFVSIMEGCSKYCSYCVVPYTRGDEVSRPLDDVLTEVAGLADQGVREVTLLGQNVNAYRGALAAGSSEIADFATLIEYVADIPGIERIRYTTSHPKEFTQRLIDTYAKVPKLVNHLHLPVQHGSDRILMAMKRGYTVLEYKSVIRKLRAIRPDLSLSTDMIVGFPGETEDDFDKMMALVHEMGYDTSFSFIYSPRPGTPAANLADDTPRDVKLKRLQHLQATIEENVARISQSMVGKVERILVEGPSRKDPNELAGRTENNRVVNFPAPLASHPRLIGQMIDVKINHAYPHSLRGELVIVSDDASAATH.

One can recognise an MTTase N-terminal domain in the interval 3 to 120 (KKVYVKTFGC…LPQMIDARRA (118 aa)). Residues Cys-12, Cys-49, Cys-83, Cys-157, Cys-161, and Cys-164 each contribute to the [4Fe-4S] cluster site. In terms of domain architecture, Radical SAM core spans 143 to 377 (RVEGPSAFVS…QATIEENVAR (235 aa)). In terms of domain architecture, TRAM spans 380 to 447 (QSMVGKVERI…PHSLRGELVI (68 aa)).

It belongs to the methylthiotransferase family. MiaB subfamily. In terms of assembly, monomer. It depends on [4Fe-4S] cluster as a cofactor.

It is found in the cytoplasm. The enzyme catalyses N(6)-dimethylallyladenosine(37) in tRNA + (sulfur carrier)-SH + AH2 + 2 S-adenosyl-L-methionine = 2-methylsulfanyl-N(6)-dimethylallyladenosine(37) in tRNA + (sulfur carrier)-H + 5'-deoxyadenosine + L-methionine + A + S-adenosyl-L-homocysteine + 2 H(+). Functionally, catalyzes the methylthiolation of N6-(dimethylallyl)adenosine (i(6)A), leading to the formation of 2-methylthio-N6-(dimethylallyl)adenosine (ms(2)i(6)A) at position 37 in tRNAs that read codons beginning with uridine. This chain is tRNA-2-methylthio-N(6)-dimethylallyladenosine synthase, found in Burkholderia cenocepacia (strain ATCC BAA-245 / DSM 16553 / LMG 16656 / NCTC 13227 / J2315 / CF5610) (Burkholderia cepacia (strain J2315)).